Here is a 352-residue protein sequence, read N- to C-terminus: C-X-C chemokine receptor type 4 (352 aa).

The interval 1-21 (MEGISIYTSDNYTEEMGSGDY) is important for chemokine binding and signaling. Topologically, residues 1–38 (MEGISIYTSDNYTEEMGSGDYDSIKEPCFREENAHFNR) are extracellular. Tyr7 is subject to Sulfotyrosine. A glycan (N-linked (GlcNAc...) asparagine) is linked at Asn11. Position 12 is a sulfotyrosine (Tyr12). Ser18 is a glycosylation site (O-linked (Xyl...) (chondroitin sulfate) serine). At Tyr21 the chain carries Sulfotyrosine. 2 disulfides stabilise this stretch: Cys28–Cys274 and Cys109–Cys186. The chain crosses the membrane as a helical span at residues 39–63 (IFLPTIYSIIFLTGIVGNGLVILVM). The Cytoplasmic segment spans residues 64–77 (GYQKKLRSMTDKYR). The helical transmembrane segment at 78–99 (LHLSVADLLFVITLPFWAVDAV) threads the bilayer. The chemokine binding stretch occupies residues 94–97 (WAVD). The Extracellular portion of the chain corresponds to 100 to 110 (ANWYFGNFLCK). Residues 111–130 (AVHVIYTVNLYSSVLILAFI) traverse the membrane as a helical segment. The interval 113–117 (HVIYT) is chemokine binding. At 131 to 154 (SLDRYLAIVHATNSQRPRKLLAEK) the chain is on the cytoplasmic side. Residues 133 to 135 (DRY) carry the Important for signaling motif. The involved in dimerization; when bound to chemokine stretch occupies residues 135 to 147 (YLAIVHATNSQRP). A helical transmembrane segment spans residues 155–174 (VVYVGVWIPALLLTIPDFIF). At 175 to 195 (ASVSEADDRYICDRFYPNDLW) the chain is on the extracellular side. The chemokine binding, important for signaling stretch occupies residues 186-190 (CDRFY). The tract at residues 191 to 210 (PNDLWVVVFQFQHIMVGLIL) is involved in dimerization. The chain crosses the membrane as a helical span at residues 196 to 216 (VVVFQFQHIMVGLILPGIVIL). At 217–241 (SCYCIIISKLSHSKGHQKRKALKTT) the chain is on the cytoplasmic side. A helical transmembrane segment spans residues 242-261 (VILILAFFACWLPYYIGISI). Topologically, residues 262 to 282 (DSFILLEIIKQGCEFENTVHK) are extracellular. Residues 266 to 268 (LLE) are involved in dimerization. A helical transmembrane segment spans residues 283 to 302 (WISITEALAFFHCCLNPILY). At 303-352 (AFLGAKFKTSAQHALTSVSRGSSLKILSKGKRGGHSSVSTESESSSFHSS) the chain is on the cytoplasmic side. 2 positions are modified to phosphoserine: Ser319 and Ser321. Phosphoserine; by PKC and GRK6 occurs at positions 324 and 325. The tract at residues 329 to 352 (LSKGKRGGHSSVSTESESSSFHSS) is disordered. Residue Ser330 is modified to Phosphoserine; by GRK6. Residue Lys331 forms a Glycyl lysine isopeptide (Lys-Gly) (interchain with G-Cter in ubiquitin) linkage. Over residues 337–352 (HSSVSTESESSSFHSS) the composition is skewed to low complexity. Position 339 is a phosphoserine; by GRK6 (Ser339). A phosphoserine mark is found at Ser348 and Ser351.

This sequence belongs to the G-protein coupled receptor 1 family. In terms of assembly, monomer. Can form homodimers. Interacts with CD164. Interacts with ARRB2; the interaction is dependent on the C-terminal phosphorylation of CXCR4 and allows activation of MAPK1 and MAPK3. Interacts with ARR3; the interaction is dependent on the C-terminal phosphorylation of CXCR4 and modulates calcium mobilization. Interacts with RNF113A; the interaction, enhanced by CXCL12, promotes CXCR4 ubiquitination and subsequent degradation. Interacts (via the cytoplasmic C-terminal) with ITCH (via the WW domains I and II); the interaction, enhanced by CXCL12, promotes CXCR4 ubiquitination and leads to its degradation. Interacts with extracellular ubiquitin. Interacts with DBN1; this interaction is enhanced by antigenic stimulation. Following LPS binding, may form a complex with GDF5, HSP90AA1 and HSPA8. In terms of processing, phosphorylated on agonist stimulation. Rapidly phosphorylated on serine and threonine residues in the C-terminal. Phosphorylation at Ser-324 and Ser-325 leads to recruitment of ITCH, ubiquitination and protein degradation. Ubiquitinated after ligand binding, leading to its degradation. Ubiquitinated by ITCH at the cell membrane on agonist stimulation. The ubiquitin-dependent mechanism, endosomal sorting complex required for transport (ESCRT), then targets CXCR4 for lysosomal degradation. This process is dependent also on prior Ser-/Thr-phosphorylation in the C-terminal of CXCR4. Also binding of ARRB1 to STAM negatively regulates CXCR4 sorting to lysosomes though modulating ubiquitination of SFR5S. Post-translationally, sulfation is required for efficient binding of CXCL12/SDF-1alpha and promotes its dimerization. In terms of processing, O- and N-glycosylated. N-glycosylation can mask coreceptor function. The O-glycosylation chondroitin sulfate attachment does not affect interaction with CXCL12/SDF-1alpha nor its coreceptor activity.

The protein resides in the cell membrane. It is found in the cell junction. Its subcellular location is the early endosome. It localises to the late endosome. The protein localises to the lysosome. In terms of biological role, receptor for the C-X-C chemokine CXCL12/SDF-1 that transduces a signal by increasing intracellular calcium ion levels and enhancing MAPK1/MAPK3 activation. Involved in the AKT signaling cascade. Plays a role in regulation of cell migration, e.g. during wound healing. Acts as a receptor for extracellular ubiquitin; leading to enhanced intracellular calcium ions and reduced cellular cAMP levels. Binds bacterial lipopolysaccharide (LPS) et mediates LPS-induced inflammatory response, including TNF secretion by monocytes. Involved in hematopoiesis and in cardiac ventricular septum formation. Also plays an essential role in vascularization of the gastrointestinal tract, probably by regulating vascular branching and/or remodeling processes in endothelial cells. Involved in cerebellar development. In the CNS, could mediate hippocampal-neuron survival. This chain is C-X-C chemokine receptor type 4 (CXCR4), found in Papio anubis (Olive baboon).